The chain runs to 55 residues: Ferredoxin (55 aa).

2 consecutive 4Fe-4S ferredoxin-type domains span residues 2–27 and 28–55; these read YKITDGCINCGACEPECPVEAISESD and AVRVIDADKCIDCGACANTCPVDAIVEG. [4Fe-4S] cluster is bound by residues Cys-8, Cys-11, Cys-14, Cys-18, Cys-37, Cys-40, Cys-43, and Cys-47.

[4Fe-4S] cluster serves as cofactor.

Ferredoxins are iron-sulfur proteins that transfer electrons in a wide variety of metabolic reactions. The sequence is that of Ferredoxin from Clostridium sp. (strain M-E).